Reading from the N-terminus, the 580-residue chain is Cis-3-hydroxy-L-proline dehydratase (580 aa).

Serine 66 (proton acceptor) is an active-site residue.

Belongs to the AcnX family. Monomer. Fe(3+) serves as cofactor.

It catalyses the reaction cis-3-hydroxy-L-proline = 1-pyrroline-2-carboxylate + H2O. With respect to regulation, inhibited by Zn(2+), Cd(2+) and Hg(2+), but not by Co(2+), Ni(2+), Mn(2+), Sr(2+), Mg(2+), or Fe(3+). Inhibited by pyrrole-2-carboxylate and its derivative 2-thiophenecarboxylate, but not by trans-aconitate, fluorocitrate and oxalomalate, which are typical inhibitors of the aconitase enzymes. Catalyzes the dehydration of cis-3-hydroxy-L-proline (c3LHyp) to Delta(1)-pyrroline-2-carboxylate (Pyr2C). Also has activity with (2S,3S,4R)-3,4-dihydroxyproline as substrate, albeit at about 300-fold lower rate. No activity with L-proline, trans-4-hydroxy-L-proline (t4LHyp), cis-4-hydroxy-L-proline (c4LHyp), trans-3-hydroxy-L-proline (t3LHyp), D-proline, cis-4-hydroxy-D-proline (c4DHyp), trans-4-hydroxy-D-proline (t4DHyp) or L-serine as substrates. No hydro-lyase activity with citrate or cis-acotinate. Does not catalyze 2-epimerization of c3LHyp to trans-3-hydroxy-D-proline (t3DHyp). Involved in a degradation pathway that converts c3LHyp to L-proline, which would allow P.aeruginosa to grow on c3LHyp as a sole carbon source. This chain is Cis-3-hydroxy-L-proline dehydratase, found in Pseudomonas aeruginosa (strain ATCC 15692 / DSM 22644 / CIP 104116 / JCM 14847 / LMG 12228 / 1C / PRS 101 / PAO1).